We begin with the raw amino-acid sequence, 219 residues long: Thiamine-phosphate synthase (219 aa).

Residues 45 to 49 (QYREK) and Asn-77 each bind 4-amino-2-methyl-5-(diphosphooxymethyl)pyrimidine. Mg(2+) contacts are provided by Asp-78 and Asp-97. Thr-116 contributes to the 4-amino-2-methyl-5-(diphosphooxymethyl)pyrimidine binding site. 142-144 (SFT) contributes to the 2-[(2R,5Z)-2-carboxy-4-methylthiazol-5(2H)-ylidene]ethyl phosphate binding site. Lys-145 is a 4-amino-2-methyl-5-(diphosphooxymethyl)pyrimidine binding site. Residues Gly-173 and 193-194 (VT) contribute to the 2-[(2R,5Z)-2-carboxy-4-methylthiazol-5(2H)-ylidene]ethyl phosphate site.

The protein belongs to the thiamine-phosphate synthase family. Requires Mg(2+) as cofactor.

The catalysed reaction is 2-[(2R,5Z)-2-carboxy-4-methylthiazol-5(2H)-ylidene]ethyl phosphate + 4-amino-2-methyl-5-(diphosphooxymethyl)pyrimidine + 2 H(+) = thiamine phosphate + CO2 + diphosphate. It carries out the reaction 2-(2-carboxy-4-methylthiazol-5-yl)ethyl phosphate + 4-amino-2-methyl-5-(diphosphooxymethyl)pyrimidine + 2 H(+) = thiamine phosphate + CO2 + diphosphate. The enzyme catalyses 4-methyl-5-(2-phosphooxyethyl)-thiazole + 4-amino-2-methyl-5-(diphosphooxymethyl)pyrimidine + H(+) = thiamine phosphate + diphosphate. It functions in the pathway cofactor biosynthesis; thiamine diphosphate biosynthesis; thiamine phosphate from 4-amino-2-methyl-5-diphosphomethylpyrimidine and 4-methyl-5-(2-phosphoethyl)-thiazole: step 1/1. Its function is as follows. Condenses 4-methyl-5-(beta-hydroxyethyl)thiazole monophosphate (THZ-P) and 2-methyl-4-amino-5-hydroxymethyl pyrimidine pyrophosphate (HMP-PP) to form thiamine monophosphate (TMP). This chain is Thiamine-phosphate synthase, found in Caldicellulosiruptor bescii (strain ATCC BAA-1888 / DSM 6725 / KCTC 15123 / Z-1320) (Anaerocellum thermophilum).